The primary structure comprises 136 residues: DNA-binding protein H-NS (136 aa).

A coiled-coil region spans residues 13 to 67 (TLRAQARECTLETLEEMLEKLEVVVNERREEDSQAQAEIEERTRKLQQYREMLIA). The DNA-binding element occupies 113-118 (QGRTPA).

This sequence belongs to the histone-like protein H-NS family. As to quaternary structure, interacts with YmoA in the absence of DNA. Homodimer that oligomerizes on DNA into higher-order complexes that form bridges between disparate regions of DNA compacting it. Interacts with YmoA.

Its subcellular location is the cytoplasm. The protein localises to the nucleoid. Its function is as follows. A DNA-binding protein implicated in transcriptional repression and chromosome organization and compaction. Binds nucleation sites in AT-rich DNA and bridges them, forming higher-order nucleoprotein complexes and condensing the chromosome. As many horizontally transferred genes are AT-rich, it plays a central role in silencing foreign genes. A subset of genes are repressed by H-NS in association with YmoA. Complements a number of hns deficiencies in E.coli; represses the bgl operon, represses hemolysin expression. This chain is DNA-binding protein H-NS, found in Yersinia enterocolitica.